A 116-amino-acid polypeptide reads, in one-letter code: Prefoldin subunit beta (116 aa).

Belongs to the prefoldin subunit beta family. As to quaternary structure, heterohexamer of two alpha and four beta subunits.

The protein resides in the cytoplasm. Molecular chaperone capable of stabilizing a range of proteins. Seems to fulfill an ATP-independent, HSP70-like function in archaeal de novo protein folding. This Thermococcus onnurineus (strain NA1) protein is Prefoldin subunit beta.